Here is a 197-residue protein sequence, read N- to C-terminus: Holliday junction branch migration complex subunit RuvA (197 aa).

Positions 1–64 (MIDSIVGTIQ…LSELECYGFL (64 aa)) are domain I. The tract at residues 65–143 (TREERELFLK…KEFKVASTSG (79 aa)) is domain II. A flexible linker region spans residues 144–152 (TEEKTYEKL). The domain III stretch occupies residues 152–197 (LEEISLALLSLGYEIDEINQVLSSEDFSELSLEDGIKLALKKLSKI).

This sequence belongs to the RuvA family. As to quaternary structure, homotetramer. Forms an RuvA(8)-RuvB(12)-Holliday junction (HJ) complex. HJ DNA is sandwiched between 2 RuvA tetramers; dsDNA enters through RuvA and exits via RuvB. An RuvB hexamer assembles on each DNA strand where it exits the tetramer. Each RuvB hexamer is contacted by two RuvA subunits (via domain III) on 2 adjacent RuvB subunits; this complex drives branch migration. In the full resolvosome a probable DNA-RuvA(4)-RuvB(12)-RuvC(2) complex forms which resolves the HJ.

The protein resides in the cytoplasm. Functionally, the RuvA-RuvB-RuvC complex processes Holliday junction (HJ) DNA during genetic recombination and DNA repair, while the RuvA-RuvB complex plays an important role in the rescue of blocked DNA replication forks via replication fork reversal (RFR). RuvA specifically binds to HJ cruciform DNA, conferring on it an open structure. The RuvB hexamer acts as an ATP-dependent pump, pulling dsDNA into and through the RuvAB complex. HJ branch migration allows RuvC to scan DNA until it finds its consensus sequence, where it cleaves and resolves the cruciform DNA. This chain is Holliday junction branch migration complex subunit RuvA, found in Caldicellulosiruptor saccharolyticus (strain ATCC 43494 / DSM 8903 / Tp8T 6331).